The sequence spans 150 residues: Small ribosomal subunit protein uS15 (150 aa).

The segment at 1 to 22 (MNKRREKGQSHSTRPPHPQPPQ) is disordered.

The protein belongs to the universal ribosomal protein uS15 family. In terms of assembly, part of the 30S ribosomal subunit.

The polypeptide is Small ribosomal subunit protein uS15 (Aeropyrum pernix (strain ATCC 700893 / DSM 11879 / JCM 9820 / NBRC 100138 / K1)).